We begin with the raw amino-acid sequence, 138 residues long: Transcriptional regulator MraZ (138 aa).

SpoVT-AbrB domains lie at Glu-3–Glu-45 and Ala-74–Arg-117.

This sequence belongs to the MraZ family. Forms oligomers.

It localises to the cytoplasm. The protein localises to the nucleoid. The protein is Transcriptional regulator MraZ of Symbiobacterium thermophilum (strain DSM 24528 / JCM 14929 / IAM 14863 / T).